The following is a 707-amino-acid chain: Polyribonucleotide nucleotidyltransferase (707 aa).

Positions 486 and 492 each coordinate Mg(2+). The KH domain occupies 553–612 (PTVTTLRVLPDKIPIIIGPAGKNIKKIIEETKVKIDLDPEGLVKIYATSKEAAEKAVSMI). The region spanning 622–690 (GEVYMGKVTR…DQGRIKVSLK (69 aa)) is the S1 motif domain.

It belongs to the polyribonucleotide nucleotidyltransferase family. Requires Mg(2+) as cofactor.

It is found in the cytoplasm. It carries out the reaction RNA(n+1) + phosphate = RNA(n) + a ribonucleoside 5'-diphosphate. Involved in mRNA degradation. Catalyzes the phosphorolysis of single-stranded polyribonucleotides processively in the 3'- to 5'-direction. The sequence is that of Polyribonucleotide nucleotidyltransferase from Sulfurihydrogenibium azorense (strain DSM 15241 / OCM 825 / Az-Fu1).